Here is a 156-residue protein sequence, read N- to C-terminus: Small ribosomal subunit protein uS7 (156 aa).

It belongs to the universal ribosomal protein uS7 family. As to quaternary structure, part of the 30S ribosomal subunit. Contacts proteins S9 and S11.

Functionally, one of the primary rRNA binding proteins, it binds directly to 16S rRNA where it nucleates assembly of the head domain of the 30S subunit. Is located at the subunit interface close to the decoding center, probably blocks exit of the E-site tRNA. The polypeptide is Small ribosomal subunit protein uS7 (Polynucleobacter necessarius subsp. necessarius (strain STIR1)).